The following is a 325-amino-acid chain: Hydroxymethylglutaryl-CoA lyase, mitochondrial (325 aa).

Residues 1 to 27 constitute a mitochondrion transit peptide; sequence MAAMRKAVPRRLVGLASLRAVSTSSMG. The region spanning 33 to 300 is the Pyruvate carboxyltransferase domain; it reads VKIVEVGPRD…HTGVNLQKLL (268 aa). Arg-41 is a binding site for substrate. Asp-42 contacts a divalent metal cation. The residue at position 48 (Lys-48) is an N6-acetyllysine; alternate. The residue at position 48 (Lys-48) is an N6-succinyllysine; alternate. Residue Lys-111 is modified to N6-acetyllysine. An N6-acetyllysine; alternate mark is found at Lys-137 and Lys-179. Residues Lys-137 and Lys-179 each carry the N6-succinyllysine; alternate modification. Positions 233 and 235 each coordinate a divalent metal cation. The active site involves Cys-266. Asn-275 contributes to the a divalent metal cation binding site. The short motif at 323–325 is the Microbody targeting signal element; that stretch reads CKL. Lys-324 is subject to N6-acetyllysine.

The protein belongs to the HMG-CoA lyase family. Homodimer; disulfide-linked. Can also form homotetramers.

It is found in the mitochondrion matrix. It localises to the peroxisome. It catalyses the reaction (3S)-3-hydroxy-3-methylglutaryl-CoA = acetoacetate + acetyl-CoA. The protein operates within metabolic intermediate metabolism; (S)-3-hydroxy-3-methylglutaryl-CoA degradation; acetoacetate from (S)-3-hydroxy-3-methylglutaryl-CoA: step 1/1. Its function is as follows. Mitochondrial 3-hydroxy-3-methylglutaryl-CoA lyase that catalyzes a cation-dependent cleavage of (S)-3-hydroxy-3-methylglutaryl-CoA into acetyl-CoA and acetoacetate, a key step in ketogenesis. Terminal step in leucine catabolism. Ketone bodies (beta-hydroxybutyrate, acetoacetate and acetone) are essential as an alternative source of energy to glucose, as lipid precursors and as regulators of metabolism. The protein is Hydroxymethylglutaryl-CoA lyase, mitochondrial (HMGCL) of Pongo abelii (Sumatran orangutan).